A 37-amino-acid polypeptide reads, in one-letter code: Large ribosomal subunit protein bL36 (37 aa).

The protein belongs to the bacterial ribosomal protein bL36 family.

This is Large ribosomal subunit protein bL36 from Shewanella frigidimarina (strain NCIMB 400).